Consider the following 313-residue polypeptide: Ethylene-responsive transcription factor ERN2 (313 aa).

Residues 1-10 (MEIQFDEPKK) are compositionally biased toward basic and acidic residues. The interval 1–29 (MEIQFDEPKKSLRPKKVNKFKGRNKKSET) is disordered. A compositionally biased stretch (basic residues) spans 11 to 24 (SLRPKKVNKFKGRN). The segment at residues 32 to 89 (KFVGVRQRPSGRYVAEIKDTTQNIRMWLGTFETAEEAARAYDEAATLLRGSKTRTNFV) is a DNA-binding region (AP2/ERF). Disordered stretches follow at residues 108–143 (NRKK…TSST) and 157–204 (TSAS…SSST). Low complexity-rich tracts occupy residues 122–143 (SSTT…TSST) and 157–193 (TSAS…TNVN).

The protein belongs to the AP2/ERF transcription factor family. ERF subfamily. In terms of tissue distribution, expressed in roots, root hairs and leaves. Expressed in root epidermis and root hairs.

It localises to the nucleus. Transcription factor involved in symbiotic nodule signaling in response to rhizobial Nod factors (NFs). Binds to the GCC box (NF-responsive box) of ENOD11 promoter. Acts as a transcriptional activator of NF-responsive box-containing target gene promoters in root hairs. Involved in early stages of root nodule development. Functions redundantly with ERN1. Is essential with ERN1 for the initiation of root hair infection, and nodule organogenesis and development. Required for accurate expression of the NF signaling genes ENOD11 and ENOD12. The polypeptide is Ethylene-responsive transcription factor ERN2 (Medicago truncatula (Barrel medic)).